We begin with the raw amino-acid sequence, 348 residues long: Myricetin O-methyltransferase (348 aa).

Met-1 carries the N-acetylmethionine modification. S-adenosyl-L-methionine-binding residues include Gly-189, Asp-212, Asp-232, Met-233, and Lys-246. Catalysis depends on His-250, which acts as the Proton acceptor.

Post-translationally, the N-terminus is blocked.

It catalyses the reaction S-adenosyl-L-methionine + a 3'-hydroxyflavonoid = S-adenosyl-L-homocysteine + a 3'-methoxyflavonoid.. The catalysed reaction is S-adenosyl-L-methionine + a 5'-hydroxy-3'-methoxyflavonoid = S-adenosyl-L-homocysteine + a 3',5'-dimethoxyflavonoid.. Methylates myricetin and dihydromyricetin at 2 sites. Inactive towards 16-hydroxytabersonine, the phenylpropanoids 5-hydroxyferulate, caffeate and their CoA-esters, flavones and flavanones possessing 2 or 3 B-ring hydroxyl groups. The sequence is that of Myricetin O-methyltransferase from Catharanthus roseus (Madagascar periwinkle).